An 88-amino-acid chain; its full sequence is Small ribosomal subunit protein bS20 (88 aa).

The protein belongs to the bacterial ribosomal protein bS20 family.

Its function is as follows. Binds directly to 16S ribosomal RNA. This chain is Small ribosomal subunit protein bS20, found in Blochmanniella floridana.